A 121-amino-acid polypeptide reads, in one-letter code: Colipase-like protein 1 (121 aa).

The first 23 residues, 1–23, serve as a signal peptide directing secretion; it reads MMLPQWLLLLFLLFFFLFLLTRG. Intrachain disulfides connect Cys-39–Cys-50, Cys-45–Cys-61, Cys-49–Cys-83, Cys-71–Cys-91, and Cys-85–Cys-107.

The protein belongs to the colipase family. Exclusively expressed in epididymis, in the corpus region.

It is found in the secreted. This chain is Colipase-like protein 1 (CLPSL1), found in Homo sapiens (Human).